A 209-amino-acid chain; its full sequence is Uracil phosphoribosyltransferase (209 aa).

5-phospho-alpha-D-ribose 1-diphosphate-binding positions include Arg-79, Arg-104, and 131–139 (DPMLATGGS). Uracil contacts are provided by residues Ile-194 and 199 to 201 (GDA). Residue Asp-200 participates in 5-phospho-alpha-D-ribose 1-diphosphate binding.

Belongs to the UPRTase family. The cofactor is Mg(2+).

The catalysed reaction is UMP + diphosphate = 5-phospho-alpha-D-ribose 1-diphosphate + uracil. Its pathway is pyrimidine metabolism; UMP biosynthesis via salvage pathway; UMP from uracil: step 1/1. Allosterically activated by GTP. Its function is as follows. Catalyzes the conversion of uracil and 5-phospho-alpha-D-ribose 1-diphosphate (PRPP) to UMP and diphosphate. The chain is Uracil phosphoribosyltransferase from Listeria monocytogenes serovar 1/2a (strain ATCC BAA-679 / EGD-e).